We begin with the raw amino-acid sequence, 148 residues long: UPF0756 membrane protein YeaL (148 aa).

The next 4 helical transmembrane spans lie at 14–34 (ALGFISHNTTVAVSILVLIIV), 51–71 (LSIGIIILTIGVMAPIASGTL), 86–106 (LVAIAVGVIVSWLGGRGVTLM), and 112–132 (LVAGLLVGTVLGVALFRGVPV).

It belongs to the UPF0756 family.

It localises to the cell membrane. The chain is UPF0756 membrane protein YeaL from Escherichia coli O157:H7.